Consider the following 239-residue polypeptide: NADH-quinone oxidoreductase subunit I 1 (239 aa).

2 consecutive 4Fe-4S ferredoxin-type domains span residues 81 to 111 and 123 to 152; these read LVPREDGKPRCVACYMCATICPAQCIYIEAA and AKFVIDELRCIVCGFCVEACPKDAIRMDSG. Positions 91, 94, 97, 101, 132, 135, 138, and 142 each coordinate [4Fe-4S] cluster.

The protein belongs to the complex I 23 kDa subunit family. In terms of assembly, NDH-1 is composed of 14 different subunits. Subunits NuoA, H, J, K, L, M, N constitute the membrane sector of the complex. It depends on [4Fe-4S] cluster as a cofactor.

The protein resides in the cell inner membrane. It catalyses the reaction a quinone + NADH + 5 H(+)(in) = a quinol + NAD(+) + 4 H(+)(out). NDH-1 shuttles electrons from NADH, via FMN and iron-sulfur (Fe-S) centers, to quinones in the respiratory chain. The immediate electron acceptor for the enzyme in this species is believed to be ubiquinone. Couples the redox reaction to proton translocation (for every two electrons transferred, four hydrogen ions are translocated across the cytoplasmic membrane), and thus conserves the redox energy in a proton gradient. In Anaeromyxobacter dehalogenans (strain 2CP-C), this protein is NADH-quinone oxidoreductase subunit I 1.